A 193-amino-acid chain; its full sequence is MTEENRPQPDQPELTVTSESSVQETGENKARTPEQEGEAMPSLEQLLKKAELDAAEHYDAWLRAKAEGENIRKRAQMDVTNAHKYAIENFSTELLSVMDSLEAALAVENATVENFKSGMELTLKQLTATFAKFNIKQLSPQGEKFDPHLHQAMCMVESELPHNTVVQVMQKGYVLNDRVIRPALVSVSKGKES.

A disordered region spans residues 1–40; sequence MTEENRPQPDQPELTVTSESSVQETGENKARTPEQEGEAM. Over residues 14 to 25 the composition is skewed to polar residues; that stretch reads LTVTSESSVQET.

The protein belongs to the GrpE family. In terms of assembly, homodimer.

Its subcellular location is the cytoplasm. Participates actively in the response to hyperosmotic and heat shock by preventing the aggregation of stress-denatured proteins, in association with DnaK and GrpE. It is the nucleotide exchange factor for DnaK and may function as a thermosensor. Unfolded proteins bind initially to DnaJ; upon interaction with the DnaJ-bound protein, DnaK hydrolyzes its bound ATP, resulting in the formation of a stable complex. GrpE releases ADP from DnaK; ATP binding to DnaK triggers the release of the substrate protein, thus completing the reaction cycle. Several rounds of ATP-dependent interactions between DnaJ, DnaK and GrpE are required for fully efficient folding. In Nitrosospira multiformis (strain ATCC 25196 / NCIMB 11849 / C 71), this protein is Protein GrpE.